A 378-amino-acid chain; its full sequence is Pseudouridine kinase (378 aa).

Pseudouridine contacts are provided by residues D12, T26, G37–N41, V38, N137, and K166. Residues S181 and T237 each coordinate Mg(2+). ATP contacts are provided by T237, G239, G242, T298, L306, and G310. D311 is a pseudouridine binding site.

This sequence belongs to the carbohydrate kinase PfkB family. As to quaternary structure, forms homodimers.

It localises to the peroxisome. It carries out the reaction pseudouridine + ATP = psi-UMP + ADP + H(+). Its function is as follows. Catalyzes the phosphorylation of pseudouridine to pseudouridine 5'-phosphate (PsiMP). Catalyzes the first step in a pseudouridine degradation pathway. Acts together with the pseudouridine 5'-phosphate glycosidase PUMY in the peroxisome to prevent toxic pseudouridine monophosphate accumulation. The polypeptide is Pseudouridine kinase (Arabidopsis thaliana (Mouse-ear cress)).